Consider the following 160-residue polypeptide: Protein-export protein SecB (160 aa).

This sequence belongs to the SecB family. In terms of assembly, homotetramer, a dimer of dimers. One homotetramer interacts with 1 SecA dimer.

The protein localises to the cytoplasm. In terms of biological role, one of the proteins required for the normal export of preproteins out of the cell cytoplasm. It is a molecular chaperone that binds to a subset of precursor proteins, maintaining them in a translocation-competent state. It also specifically binds to its receptor SecA. The protein is Protein-export protein SecB of Rhizobium etli (strain ATCC 51251 / DSM 11541 / JCM 21823 / NBRC 15573 / CFN 42).